The primary structure comprises 295 residues: MPWIQIKLNATNDNAEAIGDMLMEETGAVSVTFLDAKDTPVFEPLPGETRLWGDTDVVALYEADMDTSLILQQIKASNMLAEGFAHKVEQVEDKDWEREWMDNFHPMQFGRRLWICPSWREVPDPQAVNVMLDPGLAFGTGTHPTTALCLEWLDNLDLTGKTVIDFGCGSGILAIAAIKLGAAKVIGIDIDPQALLASKDNAARNGVEDQIEVYLPKDQPEGLVADVVVANILAGPLRELSPTIKGLLKPGGQLAMSGILDTQAESVAEFYRDDLELDPIAEKSEWCRISGRKLG.

S-adenosyl-L-methionine-binding residues include Thr-146, Gly-167, Asp-189, and Asn-231.

It belongs to the methyltransferase superfamily. PrmA family.

The protein resides in the cytoplasm. It carries out the reaction L-lysyl-[protein] + 3 S-adenosyl-L-methionine = N(6),N(6),N(6)-trimethyl-L-lysyl-[protein] + 3 S-adenosyl-L-homocysteine + 3 H(+). In terms of biological role, methylates ribosomal protein L11. The sequence is that of Ribosomal protein L11 methyltransferase from Vibrio cholerae serotype O1 (strain ATCC 39541 / Classical Ogawa 395 / O395).